The primary structure comprises 108 residues: uncharacterized protein (108 aa).

The next 2 helical transmembrane spans lie at 32 to 52 (YFFF…LLAI) and 68 to 88 (SYLL…LVVG).

The protein localises to the membrane. This is an uncharacterized protein from Saccharomyces cerevisiae (strain ATCC 204508 / S288c) (Baker's yeast).